A 118-amino-acid polypeptide reads, in one-letter code: Aspartate 1-decarboxylase (118 aa).

The active-site Schiff-base intermediate with substrate; via pyruvic acid is the serine 25. Serine 25 carries the pyruvic acid (Ser) modification. Threonine 57 serves as a coordination point for substrate. Tyrosine 58 acts as the Proton donor in catalysis. Position 73–75 (73–75 (GAA)) interacts with substrate.

The protein belongs to the PanD family. Heterooctamer of four alpha and four beta subunits. Pyruvate serves as cofactor. Post-translationally, is synthesized initially as an inactive proenzyme, which is activated by self-cleavage at a specific serine bond to produce a beta-subunit with a hydroxyl group at its C-terminus and an alpha-subunit with a pyruvoyl group at its N-terminus.

The protein localises to the cytoplasm. The enzyme catalyses L-aspartate + H(+) = beta-alanine + CO2. It participates in cofactor biosynthesis; (R)-pantothenate biosynthesis; beta-alanine from L-aspartate: step 1/1. Its function is as follows. Catalyzes the pyruvoyl-dependent decarboxylation of aspartate to produce beta-alanine. This Caulobacter vibrioides (strain ATCC 19089 / CIP 103742 / CB 15) (Caulobacter crescentus) protein is Aspartate 1-decarboxylase.